The following is a 375-amino-acid chain: Circadian-associated transcriptional repressor (375 aa).

Residues 1–32 are compositionally biased toward low complexity; it reads MDSPSSVSSYSSSSLSPSFSTSSVNSDFSFPS. 3 disordered regions span residues 1 to 102, 192 to 218, and 351 to 375; these read MDSP…LNTQ, KSSS…AASP, and DREM…DPQP. Positions 33 to 46 are enriched in basic and acidic residues; that stretch reads DNEREGKGTHELRP.

As to quaternary structure, interacts with BMAL1, PER2, CRY2, BHLHE41, HDAC1 NR3C1.

It localises to the nucleus. It is found in the PML body. In terms of biological role, transcriptional repressor which forms a negative regulatory component of the circadian clock and acts independently of the circadian transcriptional repressors: CRY1, CRY2 and BHLHE41. In a histone deacetylase-dependent manner represses the transcriptional activator activity of the CLOCK-BMAL1 heterodimer. Abrogates the interaction of BMAL1 with the transcriptional coactivator CREBBP and can repress the histone acetyl-transferase activity of the CLOCK-BMAL1 heterodimer, reducing histone acetylation of its target genes. Rhythmically binds the E-box elements (5'-CACGTG-3') on circadian gene promoters and its occupancy shows circadian oscillation antiphasic to BMAL1. Interacts with the glucocorticoid receptor (NR3C1) and contributes to the repressive function in the glucocorticoid response. The protein is Circadian-associated transcriptional repressor (Ciart) of Mus musculus (Mouse).